Consider the following 289-residue polypeptide: MALAAARRLLLHAGSRLGRREAVDGARRFANKRVLVETEGPAGVAVMKLRNPPVNSLSLECLTEFTISLEKLENDKSIRGVILTSECPGIFSAGLDLLEMYGRNPAHYAEYWKNVQELWLRLYTSNMILVSAINGASPAGGCLLALCCDYRVMADNPKYTIGLNESLLGIVAPFWFKDMYVNTIGHREAERALQLGTLFSPAEALKVGVVDEVVPEDQVHSKARSVMTKWLAIPDHSRQLTKNMMRKATADNLIKQREADIQNFTSFISKDSIQKSLHMYLEKLKQKKG.

A mitochondrion-targeting transit peptide spans 1–28 (MALAAARRLLLHAGSRLGRREAVDGARR). K48 bears the N6-acetyllysine; alternate mark. K48 is subject to N6-succinyllysine; alternate. K71 is modified (N6-succinyllysine). Position 76 is an N6-acetyllysine (K76). Residues 93-97 (AGLDL), G140, and N164 contribute to the substrate site. N6-acetyllysine; alternate occurs at positions 222, 229, 255, and 270. N6-succinyllysine; alternate occurs at positions 222, 229, 255, and 270. At K275 the chain carries N6-succinyllysine. K283 carries the N6-acetyllysine; alternate modification. Residue K283 is modified to N6-succinyllysine; alternate.

It belongs to the enoyl-CoA hydratase/isomerase family. Homotrimer.

It is found in the mitochondrion matrix. The catalysed reaction is a (3Z)-enoyl-CoA = a 4-saturated (2E)-enoyl-CoA. The enzyme catalyses a (3E)-enoyl-CoA = a 4-saturated (2E)-enoyl-CoA. It catalyses the reaction (3Z)-octenoyl-CoA = (2E)-octenoyl-CoA. It carries out the reaction (2E)-tetradecenoyl-CoA = (3Z)-tetradecenoyl-CoA. The catalysed reaction is (3Z)-dodecenoyl-CoA = (2E)-dodecenoyl-CoA. The enzyme catalyses (3Z)-hexenoyl-CoA = (2E)-hexenoyl-CoA. It catalyses the reaction (3Z)-decenoyl-CoA = (2E)-decenoyl-CoA. The protein operates within lipid metabolism; fatty acid beta-oxidation. Key enzyme of fatty acid beta-oxidation. Able to isomerize both 3-cis (3Z) and 3-trans (3E) double bonds into the 2-trans (2E) form in a range of enoyl-CoA species, with a preference for (3Z)-enoyl-CoAs over (3E)-enoyl-CoAs. The catalytic efficiency of this enzyme is not affected by the fatty acyl chain length. This Mus musculus (Mouse) protein is Enoyl-CoA delta isomerase 1, mitochondrial.